A 308-amino-acid polypeptide reads, in one-letter code: Probable GTP 3',8-cyclase (308 aa).

Positions Arg-4–Arg-224 constitute a Radical SAM core domain. Residue Arg-13 participates in GTP binding. [4Fe-4S] cluster-binding residues include Cys-20, Cys-24, and Cys-27. GTP is bound at residue Lys-60. Residue Gly-64 coordinates S-adenosyl-L-methionine. Thr-90 is a binding site for GTP. Position 114 (Ser-114) interacts with S-adenosyl-L-methionine. Residue Lys-151 participates in GTP binding. The [4Fe-4S] cluster site is built by Cys-245 and Cys-248. Arg-250–Arg-252 provides a ligand contact to GTP. A [4Fe-4S] cluster-binding site is contributed by Cys-262.

Belongs to the radical SAM superfamily. MoaA family. The cofactor is [4Fe-4S] cluster.

The enzyme catalyses GTP + AH2 + S-adenosyl-L-methionine = (8S)-3',8-cyclo-7,8-dihydroguanosine 5'-triphosphate + 5'-deoxyadenosine + L-methionine + A + H(+). The protein operates within cofactor biosynthesis; molybdopterin biosynthesis. Functionally, catalyzes the cyclization of GTP to (8S)-3',8-cyclo-7,8-dihydroguanosine 5'-triphosphate. The chain is Probable GTP 3',8-cyclase from Saccharolobus islandicus (strain M.16.27) (Sulfolobus islandicus).